A 740-amino-acid chain; its full sequence is NAD(P)H-quinone oxidoreductase subunit 5, chloroplastic (740 aa).

16 helical membrane-spanning segments follow: residues 9-29 (WIIPFIPLPVPMLIGAGLILF), 40-60 (WAFQSVLLLSIVMIFSIYLSI), 89-109 (IDPLTSIMSILITTVGIMVLI), 125-145 (FAYMSFFSTSMLGLVTSSNLI), 147-167 (IYIFWELVGLCSYLLIGFWFT), 185-205 (GDFGLLLGILGFYWITGSFEF), 219-239 (NEVNFLFVTLCAVLLFAGAVA), 258-278 (TPISALIHAATMVAAGIFLVA), 286-306 (VIPYIMYLISVIGIITVLLGA), 327-347 (LGYMMLALGMGSYRSALFHLI), 354-374 (ALLFLGSGSIIHSMETIVGYS), 396-416 (ITFLLGTLSLCGIPPLACFWS), 425-445 (WLYSPIFAIIAWATAGLTAFY), 543-563 (LFPIFVLGLFTLFVGSIGIPF), 602-622 (VLSVSIAYFGIFLASFLYKPI), and 718-738 (YLFLYLAYVSVFLLVYYLFFL).

The protein belongs to the complex I subunit 5 family. NDH is composed of at least 16 different subunits, 5 of which are encoded in the nucleus.

It localises to the plastid. Its subcellular location is the chloroplast thylakoid membrane. It carries out the reaction a plastoquinone + NADH + (n+1) H(+)(in) = a plastoquinol + NAD(+) + n H(+)(out). The catalysed reaction is a plastoquinone + NADPH + (n+1) H(+)(in) = a plastoquinol + NADP(+) + n H(+)(out). Functionally, NDH shuttles electrons from NAD(P)H:plastoquinone, via FMN and iron-sulfur (Fe-S) centers, to quinones in the photosynthetic chain and possibly in a chloroplast respiratory chain. The immediate electron acceptor for the enzyme in this species is believed to be plastoquinone. Couples the redox reaction to proton translocation, and thus conserves the redox energy in a proton gradient. In Atropa belladonna (Belladonna), this protein is NAD(P)H-quinone oxidoreductase subunit 5, chloroplastic (ndhF).